The primary structure comprises 226 residues: RPA-interacting protein A (226 aa).

The segment at Met-1 to Gly-45 is interaction with importin beta. Residues His-49–Ser-171 form an interaction with RPA1 region. The segment at Cys-144–Cys-219 adopts an RIP-type zinc-finger fold.

Interacts directly with the rpa1 subunit of RPA complex. Interacts with importin beta, but not with importin alpha. Forms a complex with the RPA complex and importin beta, which is dissociated by Ran-GTP.

It localises to the nucleus. Mediates the import of RPA complex into the nucleus, via its interaction with importin beta. This Xenopus laevis (African clawed frog) protein is RPA-interacting protein A (rpain-a).